A 247-amino-acid chain; its full sequence is 2,3-bisphosphoglycerate-dependent phosphoglycerate mutase (247 aa).

Residues R8–N15, T21–G22, R60, E87–Y90, K98, R114–R115, and G183–N184 contribute to the substrate site. H9 serves as the catalytic Tele-phosphohistidine intermediate. Residue E87 is the Proton donor/acceptor of the active site.

This sequence belongs to the phosphoglycerate mutase family. BPG-dependent PGAM subfamily. As to quaternary structure, homodimer.

The enzyme catalyses (2R)-2-phosphoglycerate = (2R)-3-phosphoglycerate. It functions in the pathway carbohydrate degradation; glycolysis; pyruvate from D-glyceraldehyde 3-phosphate: step 3/5. Functionally, catalyzes the interconversion of 2-phosphoglycerate and 3-phosphoglycerate. This Delftia acidovorans (strain DSM 14801 / SPH-1) protein is 2,3-bisphosphoglycerate-dependent phosphoglycerate mutase.